The sequence spans 143 residues: Calcitonin (143 aa).

The signal sequence occupies residues 1-25 (MGFGKSSPFLAFSILVLCQAGSLQA). A propeptide spanning residues 26 to 84 (TPLRSALETLPDPGALSEKEGRLLLAALVKAYVQRKTNELEQEEEQEETEDSSLDSSRA) is cleaved from the precursor. S42 is modified (phosphoserine). The tract at residues 62-86 (TNELEQEEEQEETEDSSLDSSRAKR) is disordered. Residues 65–78 (LEQEEEQEETEDSS) are compositionally biased toward acidic residues. The cysteines at positions 87 and 93 are disulfide-linked. The segment at 112–143 (GFGPETPGKKRDIANSLEKDLSSHFGVPTDAN) is disordered. P118 is subject to Proline amide. Residues 118 to 133 (PGKKRDIANSLEKDLS) show a composition bias toward basic and acidic residues. Residues 122–143 (RDIANSLEKDLSSHFGVPTDAN) constitute a propeptide that is removed on maturation.

Belongs to the calcitonin family.

The protein resides in the secreted. Functionally, calcitonin is a peptide hormone that causes a rapid but short-lived drop in the level of calcium and phosphate in blood by promoting the incorporation of those ions in the bones. Calcitonin function is mediated by the calcitonin receptor/CALCR and the CALCR-RAMP2 (AMYR2) receptor complex. This chain is Calcitonin (CALCA), found in Ovis aries (Sheep).